A 168-amino-acid polypeptide reads, in one-letter code: Gremlin-2 (168 aa).

The first 21 residues, M1 to T21, serve as a signal peptide directing secretion. The N-linked (GlcNAc...) asparagine glycan is linked to N40. Cystine bridges form between C73–C123, C87–C137, C97–C155, and C101–C157. Residues C73–S163 form the CTCK domain. N161 carries an N-linked (GlcNAc...) asparagine glycan.

It belongs to the DAN family. In terms of assembly, homodimer. Interacts with BMP2, BMP4 and BMP7, but has lower affinity for BMP7 than for BMP2 and BMP4. Binds heparin; this impairs the interaction with BMP2. N-glycosylated. Highly expressed in the ovary, followed by brain, spleen, colon, kidney and uterus. In ovary expressed in granulosa cells of selective early antral follicles.

Its subcellular location is the secreted. Its function is as follows. Cytokine that inhibits the activity of BMP2 and BMP4 in a dose-dependent manner, and thereby modulates signaling by BMP family members. Contributes to the regulation of embryonic morphogenesis via BMP family members. Antagonizes BMP4-induced suppression of progesterone production in granulosa cells. The protein is Gremlin-2 (Grem2) of Mus musculus (Mouse).